Here is a 578-residue protein sequence, read N- to C-terminus: Alpha-(1,6)-fucosyltransferase (578 aa).

Residues 1–9 (MRPWTGSWR) lie on the Cytoplasmic side of the membrane. A helical; Signal-anchor for type II membrane protein membrane pass occupies residues 10-30 (WIMLILFAWGTLLFYIGGHLV). The Lumenal portion of the chain corresponds to 31-578 (RDNENPDHSS…KYPTYQEAEK (548 aa)). Intrachain disulfides connect Cys207–Cys269, Cys215–Cys233, and Cys221–Cys225. In terms of domain architecture, GT23 spans 209 to 496 (KAKKLVCNIN…PDASAHFHSL (288 aa)). An SH3-binding motif is present at residues 302–308 (PRPPYLP). The interval 368–369 (RR) is important for donor substrate binding. Cys468 and Cys475 are oxidised to a cystine. Residues 505–566 (QNAHNQLAIY…PSYKVKEKIE (62 aa)) enclose the SH3 domain.

It belongs to the glycosyltransferase 23 family.

The protein resides in the golgi apparatus. The protein localises to the golgi stack membrane. The enzyme catalyses N(4)-{beta-D-GlcNAc-(1-&gt;2)-alpha-D-Man-(1-&gt;3)-[beta-D-GlcNAc-(1-&gt;2)-alpha-D-Man-(1-&gt;6)]-beta-D-Man-(1-&gt;4)-beta-D-GlcNAc-(1-&gt;4)-beta-D-GlcNAc}-L-asparaginyl-[protein] + GDP-beta-L-fucose = an N(4)-{beta-D-GlcNAc-(1-&gt;2)-alpha-D-Man-(1-&gt;3)-[beta-D-GlcNAc-(1-&gt;2)-alpha-D-Man-(1-&gt;6)]-beta-D-Man-(1-&gt;4)-beta-D-GlcNAc-(1-&gt;4)-[alpha-L-Fuc-(1-&gt;6)]-beta-D-GlcNAc}-L-asparaginyl-[protein] + GDP + H(+). The protein operates within protein modification; protein glycosylation. Functionally, catalyzes the addition of fucose in alpha 1-6 linkage to the first GlcNAc residue, next to the peptide chains in N-glycans. The chain is Alpha-(1,6)-fucosyltransferase (fut8) from Xenopus tropicalis (Western clawed frog).